The primary structure comprises 772 residues: Potassium transporter 24 (772 aa).

The Cytoplasmic segment spans residues 1–23 (MDVEGGGAAARRKGGWWWWREEA). The helical transmembrane segment at 24–44 (VLAYQSLGVVYGEVAAAPLYV) threads the bilayer. The Extracellular segment spans residues 45–66 (YRSAFAGGDIEHSAGNEEIYGA). A helical membrane pass occupies residues 67-87 (LSLVFWTLTLVPLAKYVLLVL). Residues 88–150 (RADDAGEGGT…ALERHRVLQR (63 aa)) are Cytoplasmic-facing. Residues 151–171 (LLLLLALLGTCMVIGDGVLTP) form a helical membrane-spanning segment. The Extracellular segment spans residues 172–192 (AVSVFSAVSGLELSMDKDQHK). A helical membrane pass occupies residues 193–213 (YILLPITCVILVCLFALQHYG). Topologically, residues 214-216 (THR) are cytoplasmic. A helical transmembrane segment spans residues 217–237 (VGFLFAPIVCLWLLCISIIGV). The Extracellular portion of the chain corresponds to 238 to 265 (YNIIHWNPHVYQALSPYYMYKFLRKTQT). A helical membrane pass occupies residues 266 to 286 (GGWMSLGGILLCVTGSEAMYA). Topologically, residues 287-298 (DLGHFTQNSIKM) are cytoplasmic. Residues 299–319 (AFTLLVYPALVLAYMGQAAYI) traverse the membrane as a helical segment. The Extracellular portion of the chain corresponds to 320-344 (SRHHNFEDGSHIGFYVSVPEKIRWP). Residues 345 to 365 (VLGIAILASVVGSQAIITGTF) traverse the membrane as a helical segment. Topologically, residues 366–392 (SIIKQCSSLNCFPRVKIVHTSSTVHGQ) are cytoplasmic. Residues 393–413 (IYIPEINWILMILCLSVTIGF) form a helical membrane-spanning segment. Residues 414–423 (RDTKHLTNAQ) lie on the Extracellular side of the membrane. The chain crosses the membrane as a helical span at residues 424 to 444 (GLAVITVMLVTTCLMSLVILL). Residues 445–449 (CWNKS) are Cytoplasmic-facing. Residues 450-470 (IVYALSFLLFFGAIEVIYFAA) traverse the membrane as a helical segment. The Extracellular segment spans residues 471–477 (SLVKFHE). A helical membrane pass occupies residues 478 to 498 (GAWVPVTLSFIFMMVMCVWHY). Over 499–772 (GTKKKYEFDV…TVEVGMICLV (274 aa)) the chain is Cytoplasmic. The segment at 656–684 (EEGEFDGSDSTGSSAHKEINPNTTAPKPK) is disordered.

It belongs to the HAK/KUP transporter (TC 2.A.72.3) family.

The protein resides in the membrane. In terms of biological role, high-affinity potassium transporter. This is Potassium transporter 24 (HAK24) from Oryza sativa subsp. japonica (Rice).